The sequence spans 411 residues: Pre-mRNA-splicing factor dre4 (411 aa).

Positions 3-36 constitute a WW 1 domain; it reads QPLPPGWTEHKAPSGIPYYWNAELKKSTYQRPSF. The tract at residues 65-84 is disordered; it reads NAEERKNSRDLRKQLPDRPK. Residues 66–83 are compositionally biased toward basic and acidic residues; that stretch reads AEERKNSRDLRKQLPDRP. One can recognise a WW 2 domain in the interval 89-122; it reads IPNNDSWVVVFTKKNRYFFHNLKSHESYWEPPLE. A disordered region spans residues 138–209; the sequence is ISKDSSQSQN…KSHSAEELEF (72 aa). The segment covering 140 to 151 has biased composition (polar residues); that stretch reads KDSSQSQNVDSG. The span at 152–166 shows a compositional bias: basic and acidic residues; sequence KTNHEEIHESRHLQT. Over residues 167–179 the composition is skewed to acidic residues; the sequence is EIEEPSGLEESSE. In terms of domain architecture, FF spans 239 to 293; the sequence is TDDARRVFTELLKDKNIGAYQPWELVYPKLLDDDRFYVLDSGERRKEVFEEYCKS.

In terms of assembly, component of the spliceosomal complex. Interacts with prp19.

It is found in the nucleus. Component of the spliceosome involved in mRNA processing. In Schizosaccharomyces pombe (strain 972 / ATCC 24843) (Fission yeast), this protein is Pre-mRNA-splicing factor dre4 (dre4).